The sequence spans 468 residues: Phosphatidylinositol-binding clathrin assembly protein LAP (468 aa).

In terms of domain architecture, ENTH spans 16-158 (RHSLAGQGLA…LSYRAMAFDF (143 aa)). The interval 438–468 (NAGDGTAKYDGGAGSSPFDWGATDDDGGAAQ) is disordered. The segment covering 459-468 (ATDDDGGAAQ) has biased composition (acidic residues).

Belongs to the PICALM/SNAP91 family. Binds clathrin and phosphatidylinositol 4,5-bisphosphate. As to expression, in embryos, expression is seen in central and peripheral nervous systems (brain and ventral nerve cord) and Garland cells. Coexpressed with clathrin at presynaptic boutons of neuromuscular junctions.

Its subcellular location is the membrane. It is found in the clathrin-coated pit. It localises to the golgi apparatus. The protein localises to the cytoplasmic vesicle. The protein resides in the clathrin-coated vesicle. Assembly protein recruiting clathrin and adaptor protein complex 2 (AP2) to cell membranes at sites of coated-pit formation and clathrin-vesicle assembly. May be required to determine the amount of membrane to be recycled, possibly by regulating the size of the clathrin cage. Involved in AP2-dependent clathrin-mediated endocytosis at the neuromuscular junction. This Drosophila melanogaster (Fruit fly) protein is Phosphatidylinositol-binding clathrin assembly protein LAP (lap).